A 320-amino-acid polypeptide reads, in one-letter code: GTP 3',8-cyclase (320 aa).

Positions 4–227 constitute a Radical SAM core domain; sequence LYSRRINYMR…METEKSSPAK (224 aa). R13 contributes to the GTP binding site. [4Fe-4S] cluster contacts are provided by C20 and C24. Y26 contacts S-adenosyl-L-methionine. C27 lines the [4Fe-4S] cluster pocket. GTP is bound at residue R63. An S-adenosyl-L-methionine-binding site is contributed by G67. T94 is a binding site for GTP. S118 contacts S-adenosyl-L-methionine. GTP is bound at residue K155. An S-adenosyl-L-methionine-binding site is contributed by M189. [4Fe-4S] cluster contacts are provided by C249 and C252. 254 to 256 provides a ligand contact to GTP; it reads RVR. Residue C266 participates in [4Fe-4S] cluster binding. Residues 300–312 are compositionally biased toward basic and acidic residues; sequence KHDLLTDSHEESN. The interval 300–320 is disordered; sequence KHDLLTDSHEESNRGMSQIGG.

The protein belongs to the radical SAM superfamily. MoaA family. In terms of assembly, monomer and homodimer. Requires [4Fe-4S] cluster as cofactor.

The enzyme catalyses GTP + AH2 + S-adenosyl-L-methionine = (8S)-3',8-cyclo-7,8-dihydroguanosine 5'-triphosphate + 5'-deoxyadenosine + L-methionine + A + H(+). The protein operates within cofactor biosynthesis; molybdopterin biosynthesis. Catalyzes the cyclization of GTP to (8S)-3',8-cyclo-7,8-dihydroguanosine 5'-triphosphate. In Alkaliphilus oremlandii (strain OhILAs) (Clostridium oremlandii (strain OhILAs)), this protein is GTP 3',8-cyclase.